Reading from the N-terminus, the 1399-residue chain is Dicer-like protein 2 (1399 aa).

The Helicase ATP-binding domain occupies 18 to 194 (MVEESMQSNI…EDLQQIERNL (177 aa)). 31–38 (MDTGSGKT) is a binding site for ATP. The DEAH box motif lies at 139-142 (DEAH). In terms of domain architecture, Helicase C-terminal spans 364-549 (KLQLLIKFLV…QSETGHRNFE (186 aa)). One can recognise a Dicer dsRNA-binding fold domain in the interval 562–656 (ASQHLHHFCS…LPARQEADDE (95 aa)). RNase III domains follow at residues 897-1054 (LPSI…TVGG) and 1094-1270 (LDVL…IDSL). Mg(2+) contacts are provided by Glu1133, Asp1256, and Glu1259. Residues 1301–1370 (HPKERLGHLA…AWKAVGVLES (70 aa)) form the DRBM domain.

Belongs to the helicase family. Dicer subfamily. Requires Mg(2+) as cofactor. The cofactor is Mn(2+).

Its function is as follows. Dicer-like endonuclease involved in cleaving double-stranded RNA in the RNA interference (RNAi) pathway. Produces 21 to 25 bp dsRNAs (siRNAs) which target the selective destruction of homologous RNAs leading to sequence-specific suppression of gene expression, called post-transcriptional gene silencing (PTGS). Part of a broad host defense response against viral infection and transposons. The sequence is that of Dicer-like protein 2 (DCL2) from Phaeosphaeria nodorum (strain SN15 / ATCC MYA-4574 / FGSC 10173) (Glume blotch fungus).